An 884-amino-acid chain; its full sequence is E3 ubiquitin-protein ligase BRE1-like 1 (884 aa).

The interval methionine 1–serine 37 is disordered. Residues tyrosine 49–leucine 86 are a coiled coil. The tract at residues lysine 107–threonine 127 is disordered. The span at serine 108–asparagine 121 shows a compositional bias: low complexity. Coiled-coil stretches lie at residues leucine 216–leucine 541, serine 580–isoleucine 663, arginine 696–aspartate 762, and lysine 789–arginine 827. Residues cysteine 832–serine 871 form an RING-type zinc finger.

This sequence belongs to the BRE1 family.

It localises to the nucleus. It carries out the reaction S-ubiquitinyl-[E2 ubiquitin-conjugating enzyme]-L-cysteine + [acceptor protein]-L-lysine = [E2 ubiquitin-conjugating enzyme]-L-cysteine + N(6)-ubiquitinyl-[acceptor protein]-L-lysine.. It participates in protein modification; protein ubiquitination. In terms of biological role, E3 ubiquitin-protein ligase that monoubiquitinates H2B to form H2BK143ub1. H2BK143ub1 gives a specific tag for epigenetic transcriptional activation and is also prerequisite for H3K4me and maybe H3K79me. It thereby plays a central role in histone code and gene regulation. Forms a ubiquitin ligase complex in cooperation with the E2 enzyme UBC2/RAD6. In Oryza sativa subsp. indica (Rice), this protein is E3 ubiquitin-protein ligase BRE1-like 1 (BRE1A).